A 183-amino-acid polypeptide reads, in one-letter code: ATP synthase subunit delta (183 aa).

Belongs to the ATPase delta chain family. As to quaternary structure, F-type ATPases have 2 components, F(1) - the catalytic core - and F(0) - the membrane proton channel. F(1) has five subunits: alpha(3), beta(3), gamma(1), delta(1), epsilon(1). F(0) has three main subunits: a(1), b(2) and c(10-14). The alpha and beta chains form an alternating ring which encloses part of the gamma chain. F(1) is attached to F(0) by a central stalk formed by the gamma and epsilon chains, while a peripheral stalk is formed by the delta and b chains.

The protein resides in the cell inner membrane. F(1)F(0) ATP synthase produces ATP from ADP in the presence of a proton or sodium gradient. F-type ATPases consist of two structural domains, F(1) containing the extramembraneous catalytic core and F(0) containing the membrane proton channel, linked together by a central stalk and a peripheral stalk. During catalysis, ATP synthesis in the catalytic domain of F(1) is coupled via a rotary mechanism of the central stalk subunits to proton translocation. In terms of biological role, this protein is part of the stalk that links CF(0) to CF(1). It either transmits conformational changes from CF(0) to CF(1) or is implicated in proton conduction. This Vesicomyosocius okutanii subsp. Calyptogena okutanii (strain HA) protein is ATP synthase subunit delta.